Here is a 267-residue protein sequence, read N- to C-terminus: Acyl-[acyl-carrier-protein]--UDP-N-acetylglucosamine O-acyltransferase (267 aa).

Belongs to the transferase hexapeptide repeat family. LpxA subfamily. As to quaternary structure, homotrimer.

Its subcellular location is the cytoplasm. It catalyses the reaction a (3R)-hydroxyacyl-[ACP] + UDP-N-acetyl-alpha-D-glucosamine = a UDP-3-O-[(3R)-3-hydroxyacyl]-N-acetyl-alpha-D-glucosamine + holo-[ACP]. It functions in the pathway glycolipid biosynthesis; lipid IV(A) biosynthesis; lipid IV(A) from (3R)-3-hydroxytetradecanoyl-[acyl-carrier-protein] and UDP-N-acetyl-alpha-D-glucosamine: step 1/6. Functionally, involved in the biosynthesis of lipid A, a phosphorylated glycolipid that anchors the lipopolysaccharide to the outer membrane of the cell. This Cupriavidus necator (strain ATCC 17699 / DSM 428 / KCTC 22496 / NCIMB 10442 / H16 / Stanier 337) (Ralstonia eutropha) protein is Acyl-[acyl-carrier-protein]--UDP-N-acetylglucosamine O-acyltransferase.